A 119-amino-acid chain; its full sequence is Acidic phospholipase A2 CM-II (119 aa).

3 residues coordinate Ca(2+): Y25, G27, and G29. The active site involves H45. Ca(2+) is bound at residue D46. Residue D87 is part of the active site.

The protein belongs to the phospholipase A2 family. Group II subfamily. D49 sub-subfamily. Ca(2+) is required as a cofactor. In terms of processing, contains 6 disulfide bonds. As to expression, expressed by the venom gland.

It is found in the secreted. It carries out the reaction a 1,2-diacyl-sn-glycero-3-phosphocholine + H2O = a 1-acyl-sn-glycero-3-phosphocholine + a fatty acid + H(+). In terms of biological role, PLA2 catalyzes the calcium-dependent hydrolysis of the 2-acyl groups in 3-sn-phosphoglycerides. In Bitis nasicornis (Rhinoceros adder), this protein is Acidic phospholipase A2 CM-II.